Reading from the N-terminus, the 236-residue chain is Probable transmembrane ascorbate ferrireductase 4 (236 aa).

The Cytochrome b561 domain maps to 14–210; sequence FARLSGLVVA…LGCIVITAAI (197 aa). A run of 3 helical transmembrane segments spans residues 17 to 37, 42 to 62, and 76 to 96; these read LSGL…PNLG, TLHP…AILI, and VHLW…WTKF. Residues H44, H77, and H110 each contribute to the heme b site. 3 consecutive transmembrane segments (helical) span residues 112–132, 144–164, and 191–211; these read WMGL…FMSF, TFLP…IATA, and VNGL…AAIL. H149 serves as a coordination point for heme b.

As to quaternary structure, homodimer. The cofactor is heme b.

It localises to the membrane. The catalysed reaction is Fe(3+)(out) + L-ascorbate(in) = monodehydro-L-ascorbate radical(in) + Fe(2+)(out) + H(+). Functionally, two-heme-containing cytochrome. May catalyze ascorbate-dependent trans-membrane ferric-chelate reduction. In Arabidopsis thaliana (Mouse-ear cress), this protein is Probable transmembrane ascorbate ferrireductase 4 (CYB561D).